The primary structure comprises 332 residues: Olfactory receptor 10G6 (332 aa).

At 1–46 (MLEGVEHLLLLLLLTDVNSKELQSGNQTSVSHFILVGLHHPPQLGA) the chain is on the extracellular side. Residue Asn-26 is glycosylated (N-linked (GlcNAc...) asparagine). The helical transmembrane segment at 47–67 (PLFLAFLVIYLLTVSGNGLII) threads the bilayer. The Cytoplasmic portion of the chain corresponds to 68 to 75 (LTVLVDIR). The helical transmembrane segment at 76 to 96 (LHRPMCLFLCHLSFLDMTISC) threads the bilayer. Over 97-120 (AIVPKMLAGFLLGSRIISFGGCVI) the chain is Extracellular. Cys-118 and Cys-210 are disulfide-bonded. A helical transmembrane segment spans residues 121-141 (QLFSFHFLGCTECFLYTLMAY). The Cytoplasmic portion of the chain corresponds to 142-160 (DRFLAICKPLHYATIMTHR). A helical membrane pass occupies residues 161-181 (VCNSLALGTWLGGTIHSLFQT). At 182–218 (SFVFRLPFCGPNRVDYIFCDIPAMLRLACADTAINEL) the chain is on the extracellular side. The chain crosses the membrane as a helical span at residues 219–238 (VTFADIGFLALTCFMLILTS). Residues 239–258 (YGYIVAAILRIPSADGRRNA) lie on the Cytoplasmic side of the membrane. Residues 259-279 (FSTCAAHLTVVIVYYVPCTFI) traverse the membrane as a helical segment. Topologically, residues 280–290 (YLRPCSQEPLD) are extracellular. Residues 291 to 311 (GVVAVFYTVITPLLNSIIYTL) traverse the membrane as a helical segment. The Cytoplasmic segment spans residues 312-332 (CNKEMKAALQRLGGHKEVQPH).

The protein belongs to the G-protein coupled receptor 1 family.

It is found in the cell membrane. Odorant receptor. In Homo sapiens (Human), this protein is Olfactory receptor 10G6 (OR10G6).